We begin with the raw amino-acid sequence, 231 residues long: DNA mismatch repair protein MutH (231 aa).

Belongs to the MutH family.

It is found in the cytoplasm. Its function is as follows. Sequence-specific endonuclease that cleaves unmethylated GATC sequences. It is involved in DNA mismatch repair. This Klebsiella pneumoniae (strain 342) protein is DNA mismatch repair protein MutH.